A 387-amino-acid chain; its full sequence is Phosphoglycerate kinase (387 aa).

Substrate is bound by residues 21–23 (DLN), Arg-36, 59–62 (HLGR), Arg-113, and Arg-146. ATP-binding positions include Lys-197, Glu-314, and 340–343 (GGDT).

Belongs to the phosphoglycerate kinase family. Monomer.

The protein localises to the cytoplasm. It carries out the reaction (2R)-3-phosphoglycerate + ATP = (2R)-3-phospho-glyceroyl phosphate + ADP. The protein operates within carbohydrate degradation; glycolysis; pyruvate from D-glyceraldehyde 3-phosphate: step 2/5. The protein is Phosphoglycerate kinase of Pectobacterium atrosepticum (strain SCRI 1043 / ATCC BAA-672) (Erwinia carotovora subsp. atroseptica).